We begin with the raw amino-acid sequence, 156 residues long: MIQSQINRNIRLDLADAILLSKAKKDLSFAEIADGTGLAEAFVTAALLGQQALPADAARLVGAKLDLDEDSILLLQMIPLRGCIDDRIPTDPTMYRFYEMLQVYGTTLKALVHEKFGDGIISAINFKLDVKKVADPEGGERAVITLDGKYLPTKPF.

Catalysis depends on residues Arg96, Glu99, and Ser122.

This sequence belongs to the cyanase family.

The catalysed reaction is cyanate + hydrogencarbonate + 3 H(+) = NH4(+) + 2 CO2. In terms of biological role, catalyzes the reaction of cyanate with bicarbonate to produce ammonia and carbon dioxide. In Escherichia coli (strain K12 / DH10B), this protein is Cyanate hydratase.